The sequence spans 624 residues: Vitamin B12 transporter BtuB (624 aa).

The N-terminal stretch at 1-21 is a signal peptide; the sequence is MTIKKYTLLTALSVTAFSGWA. The short motif at 31 to 38 is the TonB box element; the sequence is NEMVVTAN. Residues 43-157 form the TBDR plug domain; the sequence is PKSSVLAPVD…IGGVVNIITE (115 aa). Cyanocob(III)alamin contacts are provided by residues leucine 88, serine 90, asparagine 97, and 115 to 116; that span reads IS. Residues 160–624 form the TBDR beta-barrel domain; that stretch reads TLGSTLTAGL…EYYFTGSYNF (465 aa). A run of 3 beta stranded transmembrane segments spans residues 163–170, 174–183, and 189–200; these read STLTAGLG, YQNYNGSTQQ, and TTITLAGNYDYS. Positions 204, 216, 218, and 220 each coordinate Ca(2+). Transmembrane regions (beta stranded) follow at residues 222–232 and 237–253; these read YLGKMLWLGAN and EQFS…NRSD. Residues tyrosine 254, aspartate 255, and aspartate 266 each coordinate Ca(2+). Beta stranded transmembrane passes span 268 to 282, 284 to 301, 314 to 330, 333 to 342, 358 to 374, 376 to 386, 390 to 405, 408 to 422, 440 to 449, 455 to 464, 481 to 498, 502 to 517, 525 to 537, 543 to 557, 568 to 582, 595 to 606, and 612 to 624; these read RSLS…INFS, GGYA…QDYN, TLDD…NTYQ, LGNVGGGLDW, YEQR…QFVG, VTLEGAIRGDD, FGWH…WEFV, YRLI…KAPN, ESTQWEAAIT, LDWRLSAYRN, YYNV…TGSF, PLSH…PRNA, RRAK…QLDW, DWSV…RYDS, PVKL…LAVS, IANLFDKDYEMV, and PGRE…SYNF. Threonine 314 provides a ligand contact to cyanocob(III)alamin. A cyanocob(III)alamin-binding site is contributed by arginine 525. A TonB C-terminal box motif is present at residues 607-624; that stretch reads YGYQTPGREYYFTGSYNF.

It belongs to the TonB-dependent receptor family. BtuB (TC 1.B.14.3.1) subfamily.

It localises to the cell outer membrane. In terms of biological role, involved in the active translocation of vitamin B12 (cyanocobalamin) across the outer membrane to the periplasmic space. It derives its energy for transport by interacting with the trans-periplasmic membrane protein TonB. This chain is Vitamin B12 transporter BtuB, found in Yersinia pseudotuberculosis serotype O:1b (strain IP 31758).